We begin with the raw amino-acid sequence, 184 residues long: Der GTPase-activating protein YihI (184 aa).

Disordered stretches follow at residues 1–106 (MNRP…PTMS) and 159–184 (LGDD…KDAL). Residues 8–32 (VADKAEKSKVKRKTREELEREARER) show a composition bias toward basic and acidic residues. A compositionally biased stretch (acidic residues) spans 159 to 169 (LGDDDEEEQQE).

This sequence belongs to the YihI family. In terms of assembly, interacts with Der.

In terms of biological role, a GTPase-activating protein (GAP) that modifies Der/EngA GTPase function. May play a role in ribosome biogenesis. This is Der GTPase-activating protein YihI from Pectobacterium atrosepticum (strain SCRI 1043 / ATCC BAA-672) (Erwinia carotovora subsp. atroseptica).